The primary structure comprises 658 residues: UvrABC system protein B (658 aa).

The Helicase ATP-binding domain occupies K25–I414. Position 38–45 (G38–T45) interacts with ATP. Positions H91 to I114 match the Beta-hairpin motif. Residues Q433–R607 form the Helicase C-terminal domain. A UVR domain is found at E623 to L658.

It belongs to the UvrB family. Forms a heterotetramer with UvrA during the search for lesions. Interacts with UvrC in an incision complex.

The protein localises to the cytoplasm. Its function is as follows. The UvrABC repair system catalyzes the recognition and processing of DNA lesions. A damage recognition complex composed of 2 UvrA and 2 UvrB subunits scans DNA for abnormalities. Upon binding of the UvrA(2)B(2) complex to a putative damaged site, the DNA wraps around one UvrB monomer. DNA wrap is dependent on ATP binding by UvrB and probably causes local melting of the DNA helix, facilitating insertion of UvrB beta-hairpin between the DNA strands. Then UvrB probes one DNA strand for the presence of a lesion. If a lesion is found the UvrA subunits dissociate and the UvrB-DNA preincision complex is formed. This complex is subsequently bound by UvrC and the second UvrB is released. If no lesion is found, the DNA wraps around the other UvrB subunit that will check the other stand for damage. The chain is UvrABC system protein B from Helicobacter pylori (strain ATCC 700392 / 26695) (Campylobacter pylori).